We begin with the raw amino-acid sequence, 121 residues long: Large ribosomal subunit protein bL12 (121 aa).

This sequence belongs to the bacterial ribosomal protein bL12 family. As to quaternary structure, homodimer. Part of the ribosomal stalk of the 50S ribosomal subunit. Forms a multimeric L10(L12)X complex, where L10 forms an elongated spine to which 2 to 4 L12 dimers bind in a sequential fashion. Binds GTP-bound translation factors.

Forms part of the ribosomal stalk which helps the ribosome interact with GTP-bound translation factors. Is thus essential for accurate translation. The polypeptide is Large ribosomal subunit protein bL12 (Pediococcus pentosaceus (strain ATCC 25745 / CCUG 21536 / LMG 10740 / 183-1w)).